Reading from the N-terminus, the 350-residue chain is Probable lactoylglutathione lyase, chloroplastic (350 aa).

The transit peptide at 1–61 (MVRIIPMAAS…KLLRRSVNCL (61 aa)) directs the protein to the chloroplast. VOC domains are found at residues 88-212 (RMLH…LLER) and 218-342 (PLCQ…FVDN). H91 lines the Zn(2+) pocket. Substrate is bound at residue R95. E142 contacts Zn(2+). Residues N146 and H160 each coordinate substrate. Positions 160 and 208 each coordinate Zn(2+). E208 functions as the Proton donor/acceptor in the catalytic mechanism.

The protein belongs to the glyoxalase I family. Requires Zn(2+) as cofactor.

Its subcellular location is the plastid. The protein localises to the chloroplast stroma. It catalyses the reaction (R)-S-lactoylglutathione = methylglyoxal + glutathione. The protein operates within secondary metabolite metabolism; methylglyoxal degradation; (R)-lactate from methylglyoxal: step 1/2. Catalyzes the conversion of hemimercaptal, formed from methylglyoxal and glutathione, to S-lactoylglutathione. This is Probable lactoylglutathione lyase, chloroplastic from Arabidopsis thaliana (Mouse-ear cress).